A 348-amino-acid chain; its full sequence is GMP reductase (348 aa).

108–131 (ADFQKTKDIMALSDELIFICVDIA) serves as a coordination point for NADP(+). K(+) contacts are provided by Gly181 and Gly183. Cys186 functions as the Thioimidate intermediate in the catalytic mechanism. NADP(+) is bound at residue 216 to 239 (IIGDGGCSCAGDVSKAFGGGADFV).

The protein belongs to the IMPDH/GMPR family. GuaC type 1 subfamily. Homotetramer.

It carries out the reaction IMP + NH4(+) + NADP(+) = GMP + NADPH + 2 H(+). Functionally, catalyzes the irreversible NADPH-dependent deamination of GMP to IMP. It functions in the conversion of nucleobase, nucleoside and nucleotide derivatives of G to A nucleotides, and in maintaining the intracellular balance of A and G nucleotides. The chain is GMP reductase from Vibrio parahaemolyticus serotype O3:K6 (strain RIMD 2210633).